Consider the following 386-residue polypeptide: L-arabinitol 4-dehydrogenase (386 aa).

Zn(2+) contacts are provided by cysteine 55, histidine 80, glutamate 81, cysteine 110, cysteine 113, cysteine 116, cysteine 124, and glutamate 165. NAD(+) is bound by residues 192–193 (PI), aspartate 213, arginine 218, isoleucine 293, and 317–319 (QYR).

This sequence belongs to the zinc-containing alcohol dehydrogenase family. As to quaternary structure, homotetramer. Requires Zn(2+) as cofactor.

It carries out the reaction L-arabinitol + NAD(+) = L-xylulose + NADH + H(+). It functions in the pathway carbohydrate degradation; L-arabinose degradation via L-arabinitol; D-xylulose 5-phosphate from L-arabinose (fungal route): step 2/5. In terms of biological role, catalyzes the NAD-dependent oxidation of L-arabinitol to L-xylulose in the fungal L-arabinose catabolic pathway. L-arabinose catabolism is important for using plant material as a carbon source. Not active with NADP as cosubstrate. The polypeptide is L-arabinitol 4-dehydrogenase (ladA) (Aspergillus niger (strain ATCC MYA-4892 / CBS 513.88 / FGSC A1513)).